Consider the following 3625-residue polypeptide: Cubilin (3625 aa).

Positions 1–20 are cleaved as a signal peptide; sequence MVNNMSLLFLWSLVIFLTFA. Residues 21 to 36 constitute a propeptide, removed in mature form; the sequence is ESYGEAGGPELQRHKR. The segment at 43 to 50 is interaction with AMN; the sequence is PRMAAERG. Residue N106 is glycosylated (N-linked (GlcNAc...) asparagine). The 37-residue stretch at 133–169 folds into the EGF-like 1 domain; sequence DGKVCSSNPCQNGATCLNLHDSFFCICPSQWKGPLCS. 6 disulfides stabilise this stretch: C137-C148, C142-C157, C159-C168, C175-C191, C185-C200, and C202-C211. Residues 171-212 form the EGF-like 2; calcium-binding domain; sequence DVNECEIYSGTPLGCQNGATCINTPGSYSCLCSPETHGPQCA. The N-linked (GlcNAc...) asparagine glycan is linked to N257. Positions 264–305 constitute an EGF-like 3; calcium-binding domain; sequence DRDECSSWPAPCSALVPCFNTLGSFYCGACPTGWQGNGYICE. 20 cysteine pairs are disulfide-bonded: C268-C281, C275-C290, C293-C304, C310-C325, C317-C334, C337-C348, C354-C367, C361-C377, C379-C393, C400-C410, C405-C419, C421-C430, C437-C448, C442-C457, C459-C468, C475-C501, C528-C550, C591-C617, C644-C666, and C709-C734. The 44-residue stretch at 306–349 folds into the EGF-like 4; calcium-binding domain; the sequence is DINECEINNGGCSVAPPVECVNTPGSYYCPSCPPGYQGDGRMCT. EGF-like domains lie at 350–394 and 396–431; these read LIDL…HGCV and LSNV…MNCT. A glycan (N-linked (GlcNAc...) asparagine) is linked at N429. The 37-residue stretch at 433 to 469 folds into the EGF-like 7; calcium-binding domain; the sequence is NINECLSNPCLNGGTCVDGINAFSCECTRFWTGSLCH. CUB domains lie at 475–587, 591–703, 709–816, 817–928, 932–1042, 1045–1163, 1167–1279, 1280–1391, 1393–1508, 1512–1621, 1622–1736, 1740–1852, 1854–1965, 1980–2093, 2094–2215, 2219–2336, 2338–2450, 2454–2567, 2572–2689, 2691–2803, 2807–2921, 2922–3037, 3039–3152, 3159–3276, 3280–3397, 3397–3509, and 3513–3625; these read CGGT…WETR, CGGV…YLTT, CGGN…YQVA, CGGE…FSTE, CGEI…YEAT, SAGN…WDGS, CGGN…YQQT, CDNV…WLVH, CGGE…WRAV, CGGI…FRQA, CGGH…YVAS, CGGI…FNNI, GNDH…WFAM, CGGF…FHKS, CGGY…YEAK, CGGN…YSIA, CGGT…FDSS, CGGD…YTSS, CGGS…YSFT, CGGI…WNTE, CGGI…FLSR, CGRN…YRIT, CGGT…FRET, CGGY…YTLL, CGGT…IAGC, CSRE…WTSS, and CGGT…TWAS. N-linked (GlcNAc...) asparagine glycosylation is found at N712 and N749. C761 and C779 are disulfide-bonded. N781 carries N-linked (GlcNAc...) asparagine glycosylation. A disulfide bridge connects residues C817 and C842. N857 carries N-linked (GlcNAc...) asparagine glycosylation. Cystine bridges form between C869–C891 and C932–C958. The N-linked (GlcNAc...) asparagine glycan is linked to N957. Ca(2+) is bound at residue E980. A glycan (N-linked (GlcNAc...) asparagine) is linked at N984. C985 and C1005 are joined by a disulfide. Ca(2+) is bound by residues D988, D1027, D1029, and L1030. N-linked (GlcNAc...) asparagine glycosylation occurs at N1048. 3 residues coordinate Ca(2+): E1097, D1107, and D1148. C1104 and C1126 form a disulfide bridge. C1167 and C1193 are oxidised to a cystine. N-linked (GlcNAc...) asparagine glycosylation occurs at N1170. E1215 serves as a coordination point for Ca(2+). Residue N1219 is glycosylated (N-linked (GlcNAc...) asparagine). An intrachain disulfide couples C1220 to C1242. Residues D1223, D1264, G1266, and Q1267 each contribute to the Ca(2+) site. C1280 and C1308 are disulfide-bonded. N1287, N1309, and N1321 each carry an N-linked (GlcNAc...) asparagine glycan. Position 1330 (E1330) interacts with Ca(2+). N-linked (GlcNAc...) asparagine glycosylation occurs at N1334. A disulfide bridge links C1335 with C1353. Ca(2+)-binding residues include D1338, D1375, and V1377. 2 disulfides stabilise this stretch: C1393–C1419 and C1446–C1468. A glycan (N-linked (GlcNAc...) asparagine) is linked at N1502. A disulfide bridge connects residues C1512 and C1538. N1553 is a glycosylation site (N-linked (GlcNAc...) asparagine). 5 disulfide bridges follow: C1565-C1583, C1622-C1649, C1677-C1699, C1740-C1766, and C1793-C1814. An N-linked (GlcNAc...) asparagine glycan is attached at N1648. N1804, N1821, and N1887 each carry an N-linked (GlcNAc...) asparagine glycan. 3 disulfides stabilise this stretch: C1907-C1929, C1980-C2008, and C2034-C2056. N2087 and N2119 each carry an N-linked (GlcNAc...) asparagine glycan. Disulfide bonds link C2094–C2120 and C2219–C2249. N2276 is a glycosylation site (N-linked (GlcNAc...) asparagine). Disulfide bonds link C2277/C2299 and C2338/C2365. N2388 and N2402 each carry an N-linked (GlcNAc...) asparagine glycan. Disulfide bonds link C2392–C2413, C2454–C2480, and C2507–C2529. 4 N-linked (GlcNAc...) asparagine glycosylation sites follow: N2533, N2583, N2594, and N2612. The cysteines at positions 2572 and 2601 are disulfide-linked. 5 disulfide bridges follow: C2630–C2651, C2691–C2717, C2744–C2766, C2807–C2833, and C2862–C2885. N2887, N2925, N2928, and N2947 each carry an N-linked (GlcNAc...) asparagine glycan. Intrachain disulfides connect C2922-C2948 and C2979-C3001. T3010 carries the phosphothreonine modification. 2 disulfides stabilise this stretch: C3039/C3066 and C3093/C3115. N3044, N3105, and N3127 each carry an N-linked (GlcNAc...) asparagine glycan. 2 disulfide bridges follow: C3159–C3187 and C3217–C3239. 2 N-linked (GlcNAc...) asparagine glycosylation sites follow: N3270 and N3285. 2 cysteine pairs are disulfide-bonded: C3280/C3308 and C3334/C3356. N-linked (GlcNAc...) asparagine glycosylation occurs at N3359. A disulfide bridge links C3397 with C3423. Residues N3432, N3459, and N3535 are each glycosylated (N-linked (GlcNAc...) asparagine). 3 cysteine pairs are disulfide-bonded: C3450–C3472, C3513–C3539, and C3566–C3588.

As to quaternary structure, interacts with AMN. Component of the cubam complex composed of one CUBN trimer and one AMN chain. The cubam complex can dimerize. Interacts with LRP2 in a dual-receptor complex in a calcium-dependent manner. Found in a complex with PID1/PCLI1, LRP1 and CUBNI. Interacts with LRP1 and PID1/PCLI1. Post-translationally, the precursor is cleaved by a trans-Golgi proteinase furin, removing a propeptide. In terms of processing, N-glycosylated. In terms of tissue distribution, detected in kidney cortex (at protein level).

It is found in the apical cell membrane. The protein localises to the cell membrane. It localises to the membrane. Its subcellular location is the coated pit. The protein resides in the endosome. It is found in the lysosome membrane. In terms of biological role, endocytic receptor which plays a role in lipoprotein, vitamin and iron metabolism by facilitating their uptake. Acts together with LRP2 to mediate endocytosis of high-density lipoproteins, GC, hemoglobin, ALB, TF and SCGB1A1. Acts together with AMN to mediate endocytosis of the CBLIF-cobalamin complex. Binds to ALB, MB, Kappa and lambda-light chains, TF, hemoglobin, GC, SCGB1A1, APOA1, high density lipoprotein, and the CBLIF-cobalamin complex. Ligand binding requires calcium. Serves as important transporter in several absorptive epithelia, including intestine, renal proximal tubules and embryonic yolk sac. May play an important role in the development of the peri-implantation embryo through internalization of APOA1 and cholesterol. Binds to LGALS3 at the maternal-fetal interface. This is Cubilin (CUBN) from Sus scrofa (Pig).